Consider the following 95-residue polypeptide: Nucleoid-associated protein MARTH_orf159 (95 aa).

The protein belongs to the YbaB/EbfC family. In terms of assembly, homodimer.

It localises to the cytoplasm. Its subcellular location is the nucleoid. In terms of biological role, binds to DNA and alters its conformation. May be involved in regulation of gene expression, nucleoid organization and DNA protection. This is Nucleoid-associated protein MARTH_orf159 from Metamycoplasma arthritidis (strain 158L3-1) (Mycoplasma arthritidis).